Consider the following 376-residue polypeptide: Dehydrogenase/reductase SDR family member FEY (376 aa).

An N-acetylserine modification is found at Ser-2. 61–85 (VVTGSTSGIGRETARQLAEAGAHVV) serves as a coordination point for NAD(+). Ser-199 is a substrate binding site. Residue Tyr-227 is the Proton acceptor of the active site.

Belongs to the short-chain dehydrogenases/reductases (SDR) family. Expressed in roots, stems, leaves and flowers and, at lower levels, in siliques.

Putative oxidoreductase. Required for vegetative shoot apex development, especially during leaf positioning and for shoot apical meristem (SAM) maintenance. This is Dehydrogenase/reductase SDR family member FEY from Arabidopsis thaliana (Mouse-ear cress).